The following is a 353-amino-acid chain: Guanine nucleotide-binding protein subunit alpha (353 aa).

The N-myristoyl glycine moiety is linked to residue G2. The S-palmitoyl cysteine moiety is linked to residue C3. Residues 32–353 (NEIKMLLLGA…QENLRLCGLI (322 aa)) form the G-alpha domain. The interval 35 to 48 (KMLLLGAGESGKST) is G1 motif. GTP contacts are provided by E43, S44, G45, K46, S47, T48, D150, L175, T181, G203, N269, K270, D272, and A325. S47 lines the Mg(2+) pocket. A G2 motif region spans residues 173–181 (DVLRSRVKT). T181 provides a ligand contact to Mg(2+). A G3 motif region spans residues 196–205 (YRMFDVGGQR). The G4 motif stretch occupies residues 265 to 272 (ILFLNKID). The segment at 323 to 328 (TCATDT) is G5 motif.

The protein belongs to the G-alpha family. G(q) subfamily. As to quaternary structure, g proteins are composed of 3 units; alpha, beta and gamma. The alpha chain contains the guanine nucleotide binding site. Requires Mg(2+) as cofactor.

In terms of biological role, guanine nucleotide-binding proteins (G proteins) are involved as modulators or transducers in various transmembrane signaling systems. Involved in the mating pathway. In Cochliobolus heterostrophus (strain C4 / ATCC 48331 / race T) (Southern corn leaf blight fungus), this protein is Guanine nucleotide-binding protein subunit alpha (CGA1).